A 260-amino-acid polypeptide reads, in one-letter code: MARNVTDFHGILLFRRDYAERDFLIKFFTQEFGKKMFLVRGAKKRGFKMVADILPFTVGSYVGDIADDGLSYIRTARETRQFQDISADIFKNAYATYIMSLVDTAFPDSQPLPDWYHRVQRALTLIDDGVNAAIVTNIMEIQLMPAFGVAPQLQGCAVCGRNDLPFDYSESYGGLLCQAHWTLDPRRLHVSQRTIYYLRQFSVLDLDRLHTIKVKPQTEHALRQLMDEIYDSQIGVHPKSKRFLDQMQSWSARLKPPTDH.

It belongs to the RecO family.

In terms of biological role, involved in DNA repair and RecF pathway recombination. This Levilactobacillus brevis (strain ATCC 367 / BCRC 12310 / CIP 105137 / JCM 1170 / LMG 11437 / NCIMB 947 / NCTC 947) (Lactobacillus brevis) protein is DNA repair protein RecO.